Reading from the N-terminus, the 441-residue chain is Probable cytosolic Fe-S cluster assembly factor v1g210509 (441 aa).

Residues Cys-24, Cys-72, Cys-75, Cys-78, Cys-196, Cys-252, and Cys-401 each coordinate [4Fe-4S] cluster.

This sequence belongs to the NARF family.

In terms of biological role, component of the cytosolic iron-sulfur (Fe/S) protein assembly machinery. Required for maturation of extramitochondrial Fe/S proteins. In Nematostella vectensis (Starlet sea anemone), this protein is Probable cytosolic Fe-S cluster assembly factor v1g210509.